A 322-amino-acid chain; its full sequence is Putative HTH-type transcriptional regulatory protein rrnAC2519 (322 aa).

Positions 132-189 (LADVREDRDWSLGRLAKELGVSRRTVSKYEDGMDASVEVAAELEDLFDAPLTSPVSVL) constitute an HTH cro/C1-type domain. The segment at residues 143–162 (LGRLAKELGVSRRTVSKYED) is a DNA-binding region (H-T-H motif).

In Haloarcula marismortui (strain ATCC 43049 / DSM 3752 / JCM 8966 / VKM B-1809) (Halobacterium marismortui), this protein is Putative HTH-type transcriptional regulatory protein rrnAC2519.